Here is a 245-residue protein sequence, read N- to C-terminus: UDP-N-acetyl-D-mannosaminuronic acid transferase (245 aa).

This sequence belongs to the glycosyltransferase 26 family.

It catalyses the reaction UDP-N-acetyl-alpha-D-mannosaminouronate + N-acetyl-alpha-D-glucosaminyl-di-trans,octa-cis-undecaprenyl diphosphate = beta-D-ManNAcA-(1-&gt;4)-alpha-D-GlcNAc-di-trans,octa-cis-undecaprenyl diphosphate + UDP + H(+). It functions in the pathway bacterial outer membrane biogenesis; enterobacterial common antigen biosynthesis. Functionally, catalyzes the synthesis of Und-PP-GlcNAc-ManNAcA (Lipid II), the second lipid-linked intermediate involved in enterobacterial common antigen (ECA) synthesis. The chain is UDP-N-acetyl-D-mannosaminuronic acid transferase from Proteus mirabilis (strain HI4320).